Reading from the N-terminus, the 510-residue chain is Maturase K (510 aa).

It belongs to the intron maturase 2 family. MatK subfamily.

The protein resides in the plastid. It is found in the chloroplast. Its function is as follows. Usually encoded in the trnK tRNA gene intron. Probably assists in splicing its own and other chloroplast group II introns. The chain is Maturase K from Taxus cuspidata (Japanese yew).